Consider the following 685-residue polypeptide: RING finger protein 145 (685 aa).

The next 13 membrane-spanning stretches (helical) occupy residues 53–73, 77–97, 123–143, 151–171, 174–194, 225–245, 275–295, 316–336, 340–360, 384–404, 410–430, 460–480, and 482–502; these read YIAL…LTLP, LVQL…HQLS, FTTA…VMQT, AHLL…IVFI, FAMI…LLVP, LVLP…QIYT, YSLL…LTLC, TEGI…LQVI, FLLS…MLEI, SLCL…CQFF, LLII…TLLI, LLEF…TLFG, and WTVM…WLRA. The RING-type; atypical zinc finger occupies 537–575; it reads CSICFQDMKSAVITPCSHFFHAACLKKWLYVQETCPLCH. The disordered stretch occupies residues 582-685; it reads LQPTSSPGTP…VSTSDVNCAS (104 aa). Over residues 583 to 602 the composition is skewed to low complexity; the sequence is QPTSSPGTPTQGTPAANQNP. The span at 620-631 shows a compositional bias: basic and acidic residues; that stretch reads EGIRAEEMKTSA.

The protein localises to the membrane. This Danio rerio (Zebrafish) protein is RING finger protein 145 (rnf145).